We begin with the raw amino-acid sequence, 148 residues long: uncharacterized protein (148 aa).

An N-acetyltransferase domain is found at 8–148 (QVMQEPELKI…DGFLTLILRN (141 aa)).

It belongs to the acetyltransferase family.

This is an uncharacterized protein from Bacillus subtilis (strain 168).